The following is a 350-amino-acid chain: Anthranilate phosphoribosyltransferase (350 aa).

5-phospho-alpha-D-ribose 1-diphosphate contacts are provided by residues G82, 85 to 86 (GD), S90, 92 to 95 (NVST), 110 to 118 (KHGNRAVTG), and G122. Anthranilate is bound at residue G82. S94 serves as a coordination point for Mg(2+). N113 serves as a coordination point for anthranilate. R168 contacts anthranilate. Mg(2+) is bound by residues D232 and E233.

This sequence belongs to the anthranilate phosphoribosyltransferase family. As to quaternary structure, homodimer. Requires Mg(2+) as cofactor.

The enzyme catalyses N-(5-phospho-beta-D-ribosyl)anthranilate + diphosphate = 5-phospho-alpha-D-ribose 1-diphosphate + anthranilate. It functions in the pathway amino-acid biosynthesis; L-tryptophan biosynthesis; L-tryptophan from chorismate: step 2/5. Functionally, catalyzes the transfer of the phosphoribosyl group of 5-phosphorylribose-1-pyrophosphate (PRPP) to anthranilate to yield N-(5'-phosphoribosyl)-anthranilate (PRA). This is Anthranilate phosphoribosyltransferase from Methanothermobacter marburgensis (strain ATCC BAA-927 / DSM 2133 / JCM 14651 / NBRC 100331 / OCM 82 / Marburg) (Methanobacterium thermoautotrophicum).